The chain runs to 505 residues: 6-phosphofructo-2-kinase/fructose-2,6-bisphosphatase 2 (505 aa).

Residues 1–20 (MSGASSSEQNNNSYETKTPN) form a disordered region. Residue S2 is modified to N-acetylserine. A 6-phosphofructo-2-kinase region spans residues 2 to 248 (SGASSSEQNN…VYYLMNIHVQ (247 aa)). S29 is modified (phosphoserine; by PKA). ATP is bound at residue 45-53 (GLPARGKTY). 2 residues coordinate beta-D-fructose 6-phosphate: R78 and R102. Residue D128 is part of the active site. Beta-D-fructose 6-phosphate is bound by residues T130 and R136. The active site involves C158. 167–172 (NILEVK) lines the ATP pocket. Beta-D-fructose 6-phosphate contacts are provided by K172, R193, and Y197. Residues 249–505 (PRTIYLCRHG…RAQDMQEGAD (257 aa)) are fructose-2,6-bisphosphatase. R256 lines the beta-D-fructose 2,6-bisphosphate pocket. H257 (tele-phosphohistidine intermediate) is an active-site residue. Beta-D-fructose 2,6-bisphosphate contacts are provided by N263 and G269. Residue E326 is the Proton donor/acceptor of the active site. Beta-D-fructose 2,6-bisphosphate contacts are provided by Y337, R351, K355, Y366, Q392, and R396. 348 to 351 (FALR) serves as a coordination point for ATP. ATP contacts are provided by residues 392–396 (QAVMR) and Y428. Positions 445–505 (HRDKPTNNFP…RAQDMQEGAD (61 aa)) are disordered. The segment covering 450–476 (TNNFPKNQTPVRMRRNSFTPLSSSNTI) has biased composition (polar residues). The residue at position 466 (S466) is a Phosphoserine; by AMPK. Phosphothreonine is present on residues T468 and T475. At S483 the chain carries Phosphoserine; by BRAF. Phosphoserine is present on residues S486 and S493.

This sequence in the C-terminal section; belongs to the phosphoglycerate mutase family. Homodimer. Forms a heterodimer with PFKFB3. Post-translationally, phosphorylation by AMPK stimulates activity. In terms of tissue distribution, heart.

The enzyme catalyses beta-D-fructose 2,6-bisphosphate + H2O = beta-D-fructose 6-phosphate + phosphate. The catalysed reaction is beta-D-fructose 6-phosphate + ATP = beta-D-fructose 2,6-bisphosphate + ADP + H(+). Its activity is regulated as follows. Phosphorylation results in the activation of the kinase activity. Functionally, synthesis and degradation of fructose 2,6-bisphosphate. In Homo sapiens (Human), this protein is 6-phosphofructo-2-kinase/fructose-2,6-bisphosphatase 2.